The following is a 324-amino-acid chain: Mitochondrial oxaloacetate transport protein (324 aa).

Solcar repeat units lie at residues 20–111, 126–218, and 227–312; these read ISKF…IRSS, QSVG…AKNI, and DGPA…TMKL. A run of 6 helical transmembrane segments spans residues 26–46, 79–99, 132–152, 193–213, 233–253, and 284–305; these read FVAG…IELI, GIKG…GLNG, VFSG…LFLV, GIDA…PIYN, LTAS…WDVI, and LYKG…CLTF.

This sequence belongs to the mitochondrial carrier (TC 2.A.29) family.

It localises to the mitochondrion inner membrane. The enzyme catalyses a dicarboxylate(in) + sulfate(out) = a dicarboxylate(out) + sulfate(in). It catalyses the reaction (2S)-2-isopropylmalate(in) + sulfate(out) = (2S)-2-isopropylmalate(out) + sulfate(in). It carries out the reaction (2R,3S)-3-isopropylmalate(in) + sulfate(out) = (2R,3S)-3-isopropylmalate(out) + sulfate(in). The catalysed reaction is malonate(in) + sulfate(out) = malonate(out) + sulfate(in). The enzyme catalyses oxaloacetate(in) + sulfate(out) = oxaloacetate(out) + sulfate(in). It catalyses the reaction thiosulfate(in) + sulfate(out) = thiosulfate(out) + sulfate(in). Its activity is regulated as follows. Inhibited by alpha-keto isocaproate, an intermediate of leucine biosynthesis pathway. Antiporter that exchanges dicarboxylates and sulfur oxoanions across the inner membrane of mitochondria. Exports alpha-isopropylmalate from mitochondrial matrix to the cytosol, where it serves as a precursor for leucine biosynthesis. The chain is Mitochondrial oxaloacetate transport protein (OAC1) from Saccharomyces cerevisiae (strain ATCC 204508 / S288c) (Baker's yeast).